The sequence spans 105 residues: Large ribosomal subunit protein eL30 (105 aa).

It belongs to the eukaryotic ribosomal protein eL30 family.

The chain is Large ribosomal subunit protein eL30 (RPL30) from Candida glabrata (strain ATCC 2001 / BCRC 20586 / JCM 3761 / NBRC 0622 / NRRL Y-65 / CBS 138) (Yeast).